Reading from the N-terminus, the 208-residue chain is MSSEPPPPYPGGPTAPLLEEKSGAPPTPGRSSPAVMQPPPGMPLPPADIGPPPYEPPGHPMPQPGFIPPHMSADGTYMPPGFYPPPGPHPPMGYYPPGPYTPGPYPGPGGHTATVLVPSGAATTVTVLQGEIFEGAPVQTVCPHCQQAITTKISYEIGLMNFVLGFFCCFMGCDLGCCLIPCLINDFKDVTHTCPSCKAYIYTYKRLC.

Composition is skewed to pro residues over residues 1–13 and 36–67; these read MSSE…PGGP and MQPP…PGFI. The tract at residues 1 to 71 is disordered; the sequence is MSSEPPPPYP…PQPGFIPPHM (71 aa). The LITAF domain maps to 122–206; that stretch reads ATTVTVLQGE…CKAYIYTYKR (85 aa). Zn(2+) contacts are provided by C142 and C145. The tract at residues 164–184 is membrane-binding amphipathic helix; it reads LGFFCCFMGCDLGCCLIPCLI. Positions 194 and 197 each coordinate Zn(2+).

Belongs to the CDIP1/LITAF family. Highly expressed in brain. Expressed at lower level in heart, skeletal muscle, kidney, pancreas and liver. Weakly or not expressed in placenta and lung.

It localises to the late endosome membrane. The protein localises to the lysosome membrane. Its function is as follows. Acts as an important p53/TP53-apoptotic effector. Regulates TNF-alpha-mediated apoptosis in a p53/TP53-dependent manner. The chain is Cell death-inducing p53-target protein 1 (CDIP1) from Homo sapiens (Human).